The sequence spans 368 residues: Probable dual-specificity RNA methyltransferase RlmN (368 aa).

Glutamate 108 functions as the Proton acceptor in the catalytic mechanism. In terms of domain architecture, Radical SAM core spans 114 to 345; sequence HAYGNSVCVS…VTVRRGLGAD (232 aa). A disulfide bond links cysteine 121 and cysteine 350. Residues cysteine 128, cysteine 132, and cysteine 135 each coordinate [4Fe-4S] cluster. S-adenosyl-L-methionine contacts are provided by residues 175-176, serine 207, 230-232, and asparagine 307; these read GE and SLH. The S-methylcysteine intermediate role is filled by cysteine 350.

This sequence belongs to the radical SAM superfamily. RlmN family. It depends on [4Fe-4S] cluster as a cofactor.

The protein resides in the cytoplasm. The catalysed reaction is adenosine(2503) in 23S rRNA + 2 reduced [2Fe-2S]-[ferredoxin] + 2 S-adenosyl-L-methionine = 2-methyladenosine(2503) in 23S rRNA + 5'-deoxyadenosine + L-methionine + 2 oxidized [2Fe-2S]-[ferredoxin] + S-adenosyl-L-homocysteine. It catalyses the reaction adenosine(37) in tRNA + 2 reduced [2Fe-2S]-[ferredoxin] + 2 S-adenosyl-L-methionine = 2-methyladenosine(37) in tRNA + 5'-deoxyadenosine + L-methionine + 2 oxidized [2Fe-2S]-[ferredoxin] + S-adenosyl-L-homocysteine. Functionally, specifically methylates position 2 of adenine 2503 in 23S rRNA and position 2 of adenine 37 in tRNAs. This Pelotomaculum thermopropionicum (strain DSM 13744 / JCM 10971 / SI) protein is Probable dual-specificity RNA methyltransferase RlmN.